Reading from the N-terminus, the 537-residue chain is MPAPTQLFFPLIRNCELSRIYGTACYCHHKHLCCSSSYIPQSRLRYTPHPAYATFCRPKENWWHYTQGRRYASTPQKFYLTPPQVNSILKANEYSFKVPEFDGKNVSSILGFDSNQLPANAPIEDRRSAATCLQTRGMLLGVFDGHAGCACSQAVSERLFYYIAVSLLPHETLLEIENAVESGRALLPILQWHKHPNDYFSKEASKLYFNSLRTYWQELIDLNTGESTDIDVKEALINAFKRLDNDISLEAQVGDPNSFLNYLVLRVAFSGATACVAHVDGVDLHVANTGDSRAMLGVQEEDGSWSALTLSNDHNAQNERELERLKLEHPKSEAKSVVKQDRLLGLLMPFRAFGDVKFKWSIDLQKRVIESGPDQLNDNEYTKFIPPNYHTPPYLTAEPEVTYHRLRPQDKFLVLATDGLWETMHRQDVVRIVGEYLTGMHHQQPIAVGGYKVTLGQMHGLLTERRTKMSSVFEDQNAATHLIRHAVGNNEFGTVDHERLSKMLSLPEELARMYRDDITIIVVQFNSHVVGAYQNQE.

The transit peptide at 1-71 directs the protein to the mitochondrion; sequence MPAPTQLFFP…WWHYTQGRRY (71 aa). The PPM-type phosphatase domain maps to 109-525; it reads ILGFDSNQLP…DDITIIVVQF (417 aa). The Mn(2+) site is built by aspartate 144 and glycine 145. Position 202 is an N6-acetyllysine (lysine 202). The Mn(2+) site is built by aspartate 418 and aspartate 516.

It belongs to the PP2C family. Heterodimer of a catalytic (PDP1) and a regulatory (PDPR) subunit. It depends on Mn(2+) as a cofactor. Mg(2+) serves as cofactor.

The protein localises to the mitochondrion. It carries out the reaction O-phospho-L-seryl-[pyruvate dehydrogenase E1 alpha subunit] + H2O = L-seryl-[pyruvate dehydrogenase E1 alpha subunit] + phosphate. Magnesium-dependent and calcium-stimulated. PDP1 activity strongly depends on its Ca(2+)-dependent binding to the lipoyl domain of E2 subunit of component of the pyruvate dehydrogenase complex. Its function is as follows. Mitochondrial enzyme that catalyzes the dephosphorylation and concomitant reactivation of the alpha subunit of the E1 component of the pyruvate dehydrogenase complex (PDC), thereby stimulating the conversion of pyruvate into acetyl-CoA. This is [Pyruvate dehydrogenase [acetyl-transferring]]-phosphatase 1, mitochondrial (PDP1) from Pongo abelii (Sumatran orangutan).